The following is a 161-amino-acid chain: Nucleotide-binding protein Bcep1808_2648 (161 aa).

The protein belongs to the YajQ family.

Nucleotide-binding protein. This is Nucleotide-binding protein Bcep1808_2648 from Burkholderia vietnamiensis (strain G4 / LMG 22486) (Burkholderia cepacia (strain R1808)).